Here is a 255-residue protein sequence, read N- to C-terminus: Accessory gland-specific peptide 26Aa (255 aa).

The N-terminal stretch at 1–18 (MNQILLCSQILLLLFAVA) is a signal peptide. The segment at 86 to 110 (PINNSKSRKNSSTLPSQILTDKPNQ) is disordered. Positions 87 to 110 (INNSKSRKNSSTLPSQILTDKPNQ) are enriched in polar residues. N-linked (GlcNAc...) asparagine glycosylation is found at N88, N95, and N136. 2 disordered regions span residues 177-197 (NAQNARKPTKSCKKRPSKDIA) and 235-255 (NNPATDVPTGKSPSEGNPSTT). The span at 183–192 (KPTKSCKKRP) shows a compositional bias: basic residues. Over residues 245–255 (KSPSEGNPSTT) the composition is skewed to polar residues.

In terms of processing, it undergoes several cleavages as it is secreted and it is further processed in the recipient female. Main cells of the accessory glands of males.

Its subcellular location is the secreted. The protein resides in the extracellular space. Functionally, this protein is transferred from male to female's hemolymph during mating, affecting egglaying and behavior after mating. This is Accessory gland-specific peptide 26Aa (Acp26Aa) from Drosophila simulans (Fruit fly).